Consider the following 469-residue polypeptide: Citrate synthase, mitochondrial (469 aa).

A mitochondrion-targeting transit peptide spans 1–30 (MSFLSVSRLAPKLLNSKNATYFLVAARNAS). Residues H304 and H350 contribute to the active site. R359 serves as a coordination point for oxaloacetate. D405 is an active-site residue. Residues R431 and R451 each contribute to the oxaloacetate site.

The protein belongs to the citrate synthase family. In terms of assembly, homodimer.

It localises to the mitochondrion matrix. The catalysed reaction is oxaloacetate + acetyl-CoA + H2O = citrate + CoA + H(+). It participates in carbohydrate metabolism; tricarboxylic acid cycle; isocitrate from oxaloacetate: step 1/2. Its function is as follows. Key enzyme of the Krebs tricarboxylic acid cycle which catalyzes the synthesis of citrate from acetyl coenzyme A and oxaloacetate. The chain is Citrate synthase, mitochondrial (cs) from Thunnus albacares (Yellowfin tuna).